Consider the following 319-residue polypeptide: Cytochrome f (319 aa).

Positions 1–35 (MQKKDVCEYITKWVSVTISTLVTIGVLVFPLSSEA) are cleaved as a signal peptide. Positions 36, 56, 59, and 60 each coordinate heme. The helical transmembrane segment at 285 to 305 (IQGLLVFFASVVLAQIFLVLK) threads the bilayer.

It belongs to the cytochrome f family. As to quaternary structure, the 4 large subunits of the cytochrome b6-f complex are cytochrome b6, subunit IV (17 kDa polypeptide, petD), cytochrome f and the Rieske protein, while the 4 small subunits are PetG, PetL, PetM and PetN. The complex functions as a dimer. Heme serves as cofactor.

Its subcellular location is the plastid. The protein resides in the chloroplast thylakoid membrane. Its function is as follows. Component of the cytochrome b6-f complex, which mediates electron transfer between photosystem II (PSII) and photosystem I (PSI), cyclic electron flow around PSI, and state transitions. The polypeptide is Cytochrome f (Zygnema circumcarinatum (Green alga)).